The sequence spans 152 residues: Large ribosomal subunit protein uL13 (152 aa).

The interval 129–152 is disordered; that stretch reads EHPHEAQSPEVLDVKSMNKKNTRS.

This sequence belongs to the universal ribosomal protein uL13 family. In terms of assembly, part of the 50S ribosomal subunit.

Its function is as follows. This protein is one of the early assembly proteins of the 50S ribosomal subunit, although it is not seen to bind rRNA by itself. It is important during the early stages of 50S assembly. In Ruegeria sp. (strain TM1040) (Silicibacter sp.), this protein is Large ribosomal subunit protein uL13.